Reading from the N-terminus, the 974-residue chain is Short transient receptor potential channel 4 (974 aa).

At Met1–Arg324 the chain is on the cytoplasmic side. 4 ANK repeats span residues Leu29–Lys60, Arg71–Asn93, Val96–His118, and Pro141–Gly165. A multimerization domain region spans residues Glu87–His172. His172, Cys176, Cys178, and Cys181 together coordinate Zn(2+). A coiled-coil region spans residues Leu223 to Arg260. A multimerization domain region spans residues Asp254–Pro304. An intramembrane region (discontinuously helical) is located at residues His325 to Ile359. Residues Arg360–Pro362 are Cytoplasmic-facing. A helical membrane pass occupies residues Phe363–Ala383. At Ser384–Glu403 the chain is on the extracellular side. A helical transmembrane segment spans residues Trp404 to Ile418. Residues Glu417, Gln420, Asn435, and Asp438 each contribute to the Ca(2+) site. Topologically, residues Lys419–Asp432 are cytoplasmic. A helical membrane pass occupies residues Trp433 to Ile453. Residues Val454–Leu475 are Extracellular-facing. A helical transmembrane segment spans residues Val476–Ala498. Residues Asn499 to Arg511 lie on the Cytoplasmic side of the membrane. The chain crosses the membrane as a helical span at residues Met512–Leu534. Residues Asn535–Thr599 lie on the Extracellular side of the membrane. Cys549 and Cys554 are disulfide-bonded. A helical transmembrane segment spans residues Met600 to Met620. Residues Met615–Leu974 are interaction with ITPR1, ITPR2 and ITPR3. At Asn621 to Leu974 the chain is on the cytoplasmic side. Residues Ala765–Arg787 form a disordered region. Basic and acidic residues predominate over residues Ser773–Lys784. A phosphotyrosine; by FYN mark is found at Tyr956 and Tyr969. The PDZ-binding domain stretch occupies residues Thr972–Leu974.

It belongs to the transient receptor (TC 1.A.4) family. STrpC subfamily. TRPC4 sub-subfamily. Homotetramer. Heterotetramer with TRPC1 and/or TRPC5. Forms a heteromeric ion channel with TRPC1, with a 1:3 TRPC1:TRPC4 stoichiometry. Interacts with TRPC4AP. Isoform alpha but not isoform beta interacts with ITPR1, ITPR2 and ITPR3. Interacts with NHERF1. Interacts with MX1 and RNF24. Interacts (via CIRB domain) with SESTD1 (via the spectrin 1 repeat) and SPTBN5 (via C-terminus). Interacts with CDH5 and CTNNB1. Interacts (via protein 4.1-binding domain) with EPB41L2. Interacts with PLSCR1. In terms of tissue distribution, abundantly expressed in brain (hippocampal CA1 pyramidal neurons, dentate gyrus granule cells, and cerebral cortical neurons, and in the septal nuclei and the mitral layer of olfactory bulb). Lower levels are detected in other tissues.

The protein localises to the cell membrane. It catalyses the reaction Ca(2+)(in) = Ca(2+)(out). It carries out the reaction Na(+)(in) = Na(+)(out). The enzyme catalyses Li(+)(in) = Li(+)(out). The catalysed reaction is Cs(+)(in) = Cs(+)(out). May be operated by a phosphatidylinositol second messenger system activated by receptor tyrosine kinases or G-protein coupled receptors. May be activated by intracellular calcium store depletion. Forms a receptor-activated non-selective calcium permeant cation channel. Acts as a cell-cell contact-dependent endothelial calcium entry channel. Forms a homomeric ion channel or a heteromeric ion channel with TRPC1; the heteromeric ion channel has reduced calcium permeability compared to the homomeric channel. Also permeable to monovalent ions including sodium, lithium and cesium ions. This chain is Short transient receptor potential channel 4 (Trpc4), found in Mus musculus (Mouse).